The following is a 348-amino-acid chain: MVSNLLKVVLAIETSCDETAVAVVRSDKQVLSHKVLSQKEHVVYGGVVPEIASRAHINYLYDLTSQSIEESGCDLADIDAIAVTSGPGLIGGLIIGVMMAKAISSVTNKPIIEVNHLEAHTLLIRMFHDIDFPFLVLIISGGHCQFLIVHDVGCYQRLGSSLDDSLGEVFDKVARMLNLGYPGGPIIEQKSIMGDSKSFFLPRALINRFGCDFSFSGIKTAVRNIVVNQKYIDNDFICNISASFQDCIGDILVNRITNAIHMSQAINCKINKLVVTGGVAANHLLRNRISICVKDNNFEVLYPPTELCTDNGIMVGWAGIENLSKGYVSNLDFAPKARWPLESIKRSS.

H116 and H120 together coordinate Fe cation. Residues 138 to 142 (IISGG), D171, G184, and N282 contribute to the substrate site. Residue D310 participates in Fe cation binding.

This sequence belongs to the KAE1 / TsaD family. Requires Fe(2+) as cofactor.

The protein localises to the cytoplasm. It catalyses the reaction L-threonylcarbamoyladenylate + adenosine(37) in tRNA = N(6)-L-threonylcarbamoyladenosine(37) in tRNA + AMP + H(+). In terms of biological role, required for the formation of a threonylcarbamoyl group on adenosine at position 37 (t(6)A37) in tRNAs that read codons beginning with adenine. Is involved in the transfer of the threonylcarbamoyl moiety of threonylcarbamoyl-AMP (TC-AMP) to the N6 group of A37, together with TsaE and TsaB. TsaD likely plays a direct catalytic role in this reaction. This chain is tRNA N6-adenosine threonylcarbamoyltransferase, found in Ehrlichia ruminantium (strain Welgevonden).